The following is a 252-amino-acid chain: Eukaryotic translation initiation factor 3 subunit J (252 aa).

Disordered regions lie at residues 24–107 and 209–232; these read VPAG…TPEE and KQSK…TMKD. Positions 36–56 are enriched in acidic residues; it reads EDEEDDVKDNWDDEEEEEEVK. Positions 57–107 are enriched in basic and acidic residues; sequence EAEVKQEPKVSEKKKIAEKIKEKEKQQKKKQEELKKRLEAPEEHKELTPEE. A coiled-coil region spans residues 65 to 130; it reads KVSEKKKIAE…ESDLELAKET (66 aa).

Belongs to the eIF-3 subunit J family. In terms of assembly, component of the eukaryotic translation initiation factor 3 (eIF-3) complex, which is composed of 13 subunits: EIF3A, EIF3B, EIF3C, EIF3D, EIF3E, EIF3F, EIF3G, EIF3H, EIF3I, EIF3J, EIF3K, EIF3L and EIF3M.

The protein localises to the cytoplasm. In terms of biological role, component of the eukaryotic translation initiation factor 3 (eIF-3) complex, which is involved in protein synthesis of a specialized repertoire of mRNAs and, together with other initiation factors, stimulates binding of mRNA and methionyl-tRNAi to the 40S ribosome. The eIF-3 complex specifically targets and initiates translation of a subset of mRNAs involved in cell proliferation. This Gallus gallus (Chicken) protein is Eukaryotic translation initiation factor 3 subunit J.